The following is a 204-amino-acid chain: Thymidylate kinase (204 aa).

9 to 16 (GLDGAGKS) serves as a coordination point for ATP.

This sequence belongs to the thymidylate kinase family.

The enzyme catalyses dTMP + ATP = dTDP + ADP. Phosphorylation of dTMP to form dTDP in both de novo and salvage pathways of dTTP synthesis. This Francisella philomiragia subsp. philomiragia (strain ATCC 25017 / CCUG 19701 / FSC 153 / O#319-036) protein is Thymidylate kinase.